The primary structure comprises 427 residues: Interferon regulatory factor 3 (427 aa).

Thr3 is modified (phosphothreonine). The IRF tryptophan pentad repeat DNA-binding region spans 5 to 111 (KPRILPWLVS…DPHKIYEFVN (107 aa)). Ser14 carries the phosphoserine modification. Thr75 is modified (phosphothreonine). Residues 91–107 (RLAEDRSKDPHDPHKIY) are compositionally biased toward basic and acidic residues. Residues 91–136 (RLAEDRSKDPHDPHKIYEFVNSGVGDFSQPDTSPDTNGGGSTSDTQ) form a disordered region. Ser97 and Ser123 each carry phosphoserine. The short motif at 139–149 (ILDELLGNMVL) is the Nuclear export signal element. Residues 141 to 427 (DELLGNMVLA…GMDFQGPGES (287 aa)) are mediates interaction with ZDHHC11. At Ser175 the chain carries (Microbial infection) Phosphoserine. At Thr180 the chain carries Phosphothreonine. Ser188 carries the phosphoserine modification. Residue Lys193 forms a Glycyl lysine isopeptide (Lys-Gly) (interchain with G-Cter in ISG15) linkage. Residues 200 to 360 (EEWEFEVTAF…SWPQDQPWTK (161 aa)) are interaction with HERC5. Residues Thr237, Thr244, and Thr253 each carry the phosphothreonine modification. A disulfide bridge connects residues Cys267 and Cys289. Residues Lys360 and Lys366 each participate in a glycyl lysine isopeptide (Lys-Gly) (interchain with G-Cter in ISG15) cross-link. Lys366 is subject to N6-acetyllysine. Position 385 is a phosphoserine (Ser385). Residue Ser386 is modified to Diphosphoserine. A Phosphoserine; by TBK1 modification is found at Ser386. Ser396 carries the post-translational modification Phosphoserine; by IKKE and TBK1. Ser398 carries the post-translational modification Phosphoserine. Phosphothreonine is present on Thr404. Position 427 is a phosphoserine (Ser427).

The protein belongs to the IRF family. Monomer. Homodimer; phosphorylation-induced. Interacts (when phosphorylated) with CREBBP. Interacts with MAVS (via phosphorylated pLxIS motif). Interacts with TICAM1 (via phosphorylated pLxIS motif). Interacts with STING1 (via phosphorylated pLxIS motif). Interacts with IKBKE and TBK1. Interacts with TICAM2. Interacts with RBCK1. Interacts with HERC5. Interacts with DDX3X (phosphorylated at 'Ser-102'); the interaction allows the phosphorylation and activation of IRF3 by IKBKE. Interacts with TRIM21 and ULK1, in the presence of TRIM21; this interaction leads to IRF3 degradation by autophagy. Interacts with RIOK3; RIOK3 probably mediates the interaction of TBK1 with IRF3. Interacts with ILRUN; the interaction inhibits IRF3 binding to its DNA consensus sequence. Interacts with LYAR; this interaction impairs IRF3 DNA-binding activity. Interacts with TRAF3. Interacts with ZDHHC11; ZDHHC11 recruits IRF3 to STING1 upon DNA virus infection and thereby promotes IRF3 activation. Interacts with HSP90AA1; the interaction mediates IRF3 association with TOMM70. Interacts with BCL2; the interaction decreases upon Sendai virus infection. Interacts with BAX; the interaction is direct, increases upon Sendai virus infection and mediates the formation of the apoptosis complex TOMM70:HSP90AA1:IRF3:BAX. Interacts with DDX56. Interacts with NBR1. As to quaternary structure, (Microbial infection) Interacts with rotavirus A NSP1 (via pLxIS motif); this interaction leads to the proteasome-dependent degradation of IRF3. In terms of assembly, (Microbial infection) Interacts with herpes virus 8/HHV-8 protein VIRF1. (Microbial infection) Interacts with Seneca Valley virus protease 3C; this interaction is involved in the suppression of IRF3 expression and phosphorylation by the virus. As to quaternary structure, (Microbial infection) Interacts with herpes virus 2/HHV-2 protein ICP27; this interaction inhibits IRF3 phosphorylation and nuclear translocation. In terms of assembly, (Microbial infection) Interacts with human cytomegalovirus protein UL44; this interaction prevents IRF3 binding to its promoters. (Microbial infection) Interacts with the two fragments of MERS-COV protein N produced by CASP6 through proteolytic cleavage; both interactions inhibit IRF3 nuclear translocation after activation and IFN signaling. Post-translationally, constitutively phosphorylated on many Ser/Thr residues. Activated following phosphorylation by TBK1 and IKBKE. Innate adapter proteins, such as MAVS, STING1 or TICAM1, are first activated by viral RNA, cytosolic DNA, and bacterial lipopolysaccharide (LPS), respectively, leading to activation of the kinases TBK1 and IKBKE. These kinases then phosphorylate the adapter proteins on the pLxIS motif, leading to recruitment of IRF3, thereby licensing IRF3 for phosphorylation by TBK1. Phosphorylation at Ser-386 is followed by pyrophosphorylation at the same residue, promoting phosphorylation at Ser-396. Phosphorylated IRF3 dissociates from the adapter proteins, dimerizes, and then enters the nucleus to induce IFNs. Pyrophosphorylated by UAP1 following phosphorylation at Ser-386 by TBK1. Pyrophosphorylation promotes subsequent phosphorylation at Ser-396, leading to homodimerization of IRF3. In terms of processing, acetylation at Lys-366 by KAT8 inhibits recruimtent to promoters and transcription factor activity. Acetylation by KAT8 is promoted by phosphorylation at Ser-396. Post-translationally, ubiquitinated; ubiquitination involves RBCK1 leading to proteasomal degradation. Polyubiquitinated; ubiquitination involves TRIM21 leading to proteasomal degradation. Ubiquitinated by UBE3C, leading to its degradation. Deubiquitinated by USP5 on both 'Lys-48'-linked unanchored and 'Lys-63'-linked anchored polyubiquitin, leading to inhibition of anti-RNA viral innate immunity. ISGylated by HERC5 resulting in sustained IRF3 activation and in the inhibition of IRF3 ubiquitination by disrupting PIN1 binding. The phosphorylation state of IRF3 does not alter ISGylation. In terms of processing, proteolytically cleaved by apoptotic caspases during apoptosis, leading to its inactivation. Cleavage by CASP3 during virus-induced apoptosis inactivates it, preventing cytokine overproduction. Post-translationally, (Microbial infection) ISGylated. ISGylation is cleaved and removed by SARS-COV-2 nsp3 which attenuates type I interferon responses. (Microbial infection) Phosphorylation and subsequent activation of IRF3 is inhibited by vaccinia virus protein E3. In terms of processing, (Microbial infection) Phosphorylated by herpes simplex virus 1/HHV-1 US3 at Ser-175 to prevent IRF3 activation. Expressed constitutively in a variety of tissues.

Its subcellular location is the cytoplasm. It localises to the nucleus. The protein localises to the mitochondrion. In the absence of viral infection, maintained as a monomer in an autoinhibited state. Phosphorylation by TBK1 and IKBKE disrupts this autoinhibition leading to the liberation of the DNA-binding and dimerization activities and its nuclear localization where it can activate type I IFN and ISG genes. Phosphorylation and activation follow the following steps: innate adapter proteins, such as MAVS, STING1 or TICAM1, are first activated by viral RNA, cytosolic DNA and bacterial lipopolysaccharide (LPS), respectively, leading to activation of the kinases TBK1 and IKBKE. These kinases then phosphorylate the adapter proteins on their pLxIS motif, leading to recruitment of IRF3, thereby licensing IRF3 for phosphorylation by TBK1. Phosphorylated IRF3 dissociates from the adapter proteins, dimerizes, and then enters the nucleus to induce IFNs. Its activity is regulated as follows. (Microbial infection) Activated upon coronavirus SARS-CoV-2 infection. Its function is as follows. Key transcriptional regulator of type I interferon (IFN)-dependent immune responses which plays a critical role in the innate immune response against DNA and RNA viruses. Regulates the transcription of type I IFN genes (IFN-alpha and IFN-beta) and IFN-stimulated genes (ISG) by binding to an interferon-stimulated response element (ISRE) in their promoters. Acts as a more potent activator of the IFN-beta (IFNB) gene than the IFN-alpha (IFNA) gene and plays a critical role in both the early and late phases of the IFNA/B gene induction. Found in an inactive form in the cytoplasm of uninfected cells and following viral infection, double-stranded RNA (dsRNA), or toll-like receptor (TLR) signaling, is phosphorylated by IKBKE and TBK1 kinases. This induces a conformational change, leading to its dimerization and nuclear localization and association with CREB binding protein (CREBBP) to form dsRNA-activated factor 1 (DRAF1), a complex which activates the transcription of the type I IFN and ISG genes. Can activate distinct gene expression programs in macrophages and can induce significant apoptosis in primary macrophages. In response to Sendai virus infection, is recruited by TOMM70:HSP90AA1 to mitochondrion and forms an apoptosis complex TOMM70:HSP90AA1:IRF3:BAX inducing apoptosis. Key transcription factor regulating the IFN response during SARS-CoV-2 infection. This is Interferon regulatory factor 3 from Homo sapiens (Human).